Consider the following 1486-residue polypeptide: Chromosome partition protein MukB (1486 aa).

34–41 contributes to the ATP binding site; sequence GGNGAGKS. 3 coiled-coil regions span residues 326–418, 444–480, and 509–603; these read LEAD…QYNQ, LETF…QAYQ, and RHLA…RAPV. The segment at 666-783 is flexible hinge; sequence PGGSEDQRLN…EVPLFGRAAR (118 aa). Coiled coils occupy residues 835–923, 977–1115, and 1209–1266; these read EAEI…AKLE, EMLS…TAKA, and VEAI…QNVS.

It belongs to the SMC family. MukB subfamily. Homodimerization via its hinge domain. Binds to DNA via its C-terminal region. Interacts, and probably forms a ternary complex, with MukE and MukF via its C-terminal region. The complex formation is stimulated by calcium or magnesium. Interacts with tubulin-related protein FtsZ.

The protein localises to the cytoplasm. The protein resides in the nucleoid. In terms of biological role, plays a central role in chromosome condensation, segregation and cell cycle progression. Functions as a homodimer, which is essential for chromosome partition. Involved in negative DNA supercoiling in vivo, and by this means organize and compact chromosomes. May achieve or facilitate chromosome segregation by condensation DNA from both sides of a centrally located replisome during cell division. The protein is Chromosome partition protein MukB of Shigella flexneri serotype 5b (strain 8401).